The sequence spans 198 residues: Recombination protein RecR (198 aa).

The C4-type zinc-finger motif lies at 57–72; that stretch reads CSECGHITEQDPCYIC. The Toprim domain occupies 80–175; the sequence is SVICVVEDDK…TVTRLAQGLS (96 aa).

It belongs to the RecR family.

In terms of biological role, may play a role in DNA repair. It seems to be involved in an RecBC-independent recombinational process of DNA repair. It may act with RecF and RecO. In Staphylococcus saprophyticus subsp. saprophyticus (strain ATCC 15305 / DSM 20229 / NCIMB 8711 / NCTC 7292 / S-41), this protein is Recombination protein RecR.